We begin with the raw amino-acid sequence, 446 residues long: Protein odr-4 homolog (446 aa).

Residues 76–96 form a helical membrane-spanning segment; it reads ASQVGRMLPGGLMVLGVFLMT. Residues 394 to 415 are compositionally biased toward basic and acidic residues; it reads HPEKRESEPASQHLESKPENKA. The disordered stretch occupies residues 394–417; that stretch reads HPEKRESEPASQHLESKPENKARS. Residues 426–446 form a helical membrane-spanning segment; it reads GLVISTIVASIAIIISFYYIM.

Belongs to the ODR-4 family.

It localises to the membrane. Its function is as follows. May play a role in the trafficking of a subset of G-protein coupled receptors. The polypeptide is Protein odr-4 homolog (odr4) (Xenopus laevis (African clawed frog)).